We begin with the raw amino-acid sequence, 641 residues long: Mediator of RNA polymerase II transcription subunit 17 (641 aa).

Residues 159–186 (RLQSFNAAADKLLKSAARLETEVASETR) are a coiled coil.

It belongs to the Mediator complex subunit 17 family. As to quaternary structure, component of the Mediator complex.

The protein resides in the nucleus. In terms of biological role, component of the Mediator complex, a coactivator involved in the regulated transcription of nearly all RNA polymerase II-dependent genes. Mediator functions as a bridge to convey information from gene-specific regulatory proteins to the basal RNA polymerase II transcription machinery. Mediator is recruited to promoters by direct interactions with regulatory proteins and serves as a scaffold for the assembly of a functional preinitiation complex with RNA polymerase II and the general transcription factors. The chain is Mediator of RNA polymerase II transcription subunit 17 (srb4) from Aspergillus clavatus (strain ATCC 1007 / CBS 513.65 / DSM 816 / NCTC 3887 / NRRL 1 / QM 1276 / 107).